Consider the following 253-residue polypeptide: Triosephosphate isomerase (253 aa).

Residue 9 to 11 (NWK) coordinates substrate. Catalysis depends on H96, which acts as the Electrophile. The active-site Proton acceptor is E168. Substrate is bound by residues G174, S213, and 234 to 235 (GG).

This sequence belongs to the triosephosphate isomerase family. As to quaternary structure, homodimer.

The protein localises to the cytoplasm. It carries out the reaction D-glyceraldehyde 3-phosphate = dihydroxyacetone phosphate. It participates in carbohydrate biosynthesis; gluconeogenesis. Its pathway is carbohydrate degradation; glycolysis; D-glyceraldehyde 3-phosphate from glycerone phosphate: step 1/1. Its function is as follows. Involved in the gluconeogenesis. Catalyzes stereospecifically the conversion of dihydroxyacetone phosphate (DHAP) to D-glyceraldehyde-3-phosphate (G3P). The protein is Triosephosphate isomerase of Hydrogenovibrio crunogenus (strain DSM 25203 / XCL-2) (Thiomicrospira crunogena).